The chain runs to 361 residues: Zygote arrest protein 1 (361 aa).

Disordered regions lie at residues 68–129 (GPRP…PRSW) and 142–252 (GLSS…EQDK). Residues 116-128 (PRSPARAGRPPRS) show a composition bias toward low complexity. Threonine 155 is modified (phosphothreonine). Basic and acidic residues predominate over residues 238 to 252 (ASRDRASPQSTEQDK). The 3CxxC-type zinc-finger motif lies at 263 to 346 (KYGYYHCKDC…RQDLCGRCKD (84 aa)).

This sequence belongs to the ZAR1 family. Interacts with YBX2. Phosphorylation by CDK1 does not regulate formation of MARDO (mitochondria-associated ribonucleoprotein domain) membraneless compartment. In terms of processing, ubiquitinated and degradaded by the proteasome during oocyte meiotic maturation, leading to MARDO (mitochondria-associated ribonucleoprotein domain) membraneless compartment dissolution.

The protein localises to the cytoplasm. It localises to the cytoplasmic ribonucleoprotein granule. In terms of biological role, mRNA-binding protein that mediates formation of MARDO (mitochondria-associated ribonucleoprotein domain), a membraneless compartment that stores maternal mRNAs in oocytes. MARDO assembly around mitochondria is directed by an increase in mitochondrial membrane potential during oocyte growth. Promotes formation of MARDO phase-separated membraneless compartment by undergoing liquid-liquid phase separation upon binding to maternal mRNAs. Binds to the 3'-UTR of maternal mRNAs. Maternal mRNAs stored in the MARDO are translationally repressed. Essential for female fertility and oocyte-to-embryo transition by coordinating maternal mRNA storage, translation and degradation. The sequence is that of Zygote arrest protein 1 from Rattus norvegicus (Rat).